A 179-amino-acid chain; its full sequence is Probable chemoreceptor glutamine deamidase CheD 2 (179 aa).

This sequence belongs to the CheD family.

It catalyses the reaction L-glutaminyl-[protein] + H2O = L-glutamyl-[protein] + NH4(+). Probably deamidates glutamine residues to glutamate on methyl-accepting chemotaxis receptors (MCPs), playing an important role in chemotaxis. The protein is Probable chemoreceptor glutamine deamidase CheD 2 of Ruegeria sp. (strain TM1040) (Silicibacter sp.).